A 242-amino-acid chain; its full sequence is N-acetylmuramate alpha-1-phosphate uridylyltransferase (242 aa).

Residues 16–18 and Lys28 contribute to the UTP site; that span reads GTR. Asn113 serves as a coordination point for substrate. Residue Asp115 participates in Mg(2+) binding. Asp158 lines the substrate pocket.

It belongs to the nucleotidyltransferase MurU family. Monomer. Mg(2+) is required as a cofactor.

It catalyses the reaction N-acetyl-alpha-D-muramate 1-phosphate + UDP + H(+) = UDP-N-acetyl-alpha-D-muramate + phosphate. Its pathway is cell wall biogenesis; peptidoglycan recycling. Functionally, catalyzes the formation of UDP-N-acetylmuramate (UDP-MurNAc), a crucial precursor of the bacterial peptidoglycan cell wall, from UTP and MurNAc-alpha-1P. Is likely involved in peptidoglycan recycling as part of a cell wall recycling pathway that bypasses de novo biosynthesis of the peptidoglycan precursor UDP-MurNAc. Is able to complement the fosfomycin sensitivity phenotype of a P.putida mutant lacking murU. This chain is N-acetylmuramate alpha-1-phosphate uridylyltransferase, found in Caulobacter vibrioides (strain ATCC 19089 / CIP 103742 / CB 15) (Caulobacter crescentus).